Reading from the N-terminus, the 108-residue chain is Curli assembly protein CsgC (108 aa).

Positions 1 to 8 (MHTLLLLA) are cleaved as a signal peptide.

The protein belongs to the CsgC/AgfC family.

Its subcellular location is the periplasm. Plays a role in the extracellular assembly of CsgA into thin aggregative fimbriae (Tafi) fibers. Assembly may also require CsgE. Tafi are thought to be assembled via an extracellular nucleation-precipitation (ENP) pathway, and possibly also via an intracellular non-CsgC-dependent pathway. The protein is Curli assembly protein CsgC of Salmonella arizonae (strain ATCC BAA-731 / CDC346-86 / RSK2980).